Consider the following 380-residue polypeptide: Chaperone protein DnaJ 2 (380 aa).

The J domain occupies 10-75 (DYYKILGVSK…KKRKEYDQAR (66 aa)). The span at 32–56 (KIARDNHPDSHPGDKAAEARFKEAS) shows a compositional bias: basic and acidic residues. Positions 32–63 (KIARDNHPDSHPGDKAAEARFKEASEANDVLS) are disordered. Residues 151–230 (GTTVTMDMVS…CHGSGRAKST (80 aa)) form a CR-type zinc finger. Positions 164, 167, 181, 184, 204, 207, 218, and 221 each coordinate Zn(2+). 4 CXXCXGXG motif repeats span residues 164-171 (CQACRGTG), 181-188 (CSTCQGSG), 204-211 (CPDCHGRG), and 218-225 (CQVCHGSG).

It belongs to the DnaJ family. In terms of assembly, homodimer. It depends on Zn(2+) as a cofactor.

It localises to the cytoplasm. In terms of biological role, participates actively in the response to hyperosmotic and heat shock by preventing the aggregation of stress-denatured proteins and by disaggregating proteins, also in an autonomous, DnaK-independent fashion. Unfolded proteins bind initially to DnaJ; upon interaction with the DnaJ-bound protein, DnaK hydrolyzes its bound ATP, resulting in the formation of a stable complex. GrpE releases ADP from DnaK; ATP binding to DnaK triggers the release of the substrate protein, thus completing the reaction cycle. Several rounds of ATP-dependent interactions between DnaJ, DnaK and GrpE are required for fully efficient folding. Also involved, together with DnaK and GrpE, in the DNA replication of plasmids through activation of initiation proteins. This chain is Chaperone protein DnaJ 2, found in Cutibacterium acnes (strain DSM 16379 / KPA171202) (Propionibacterium acnes).